Here is a 452-residue protein sequence, read N- to C-terminus: Tubulin alpha-2/alpha-4 chain (452 aa).

Residue Gln-11 participates in GTP binding. Lys-40 carries the N6-acetyllysine modification. 7 residues coordinate GTP: Glu-71, Ser-140, Gly-144, Thr-145, Thr-179, Asn-206, and Asn-228. A Mg(2+)-binding site is contributed by Glu-71. Residue Glu-254 is part of the active site. A disordered region spans residues 432 to 452; that stretch reads YEEVGVDSVEGEGEEEGGEEY.

The protein belongs to the tubulin family. In terms of assembly, dimer of alpha and beta chains. A typical microtubule is a hollow water-filled tube with an outer diameter of 25 nm and an inner diameter of 15 nM. Alpha-beta heterodimers associate head-to-tail to form protofilaments running lengthwise along the microtubule wall with the beta-tubulin subunit facing the microtubule plus end conferring a structural polarity. Microtubules usually have 13 protofilaments but different protofilament numbers can be found in some organisms and specialized cells. It depends on Mg(2+) as a cofactor. Undergoes a tyrosination/detyrosination cycle, the cyclic removal and re-addition of a C-terminal tyrosine residue by the enzymes tubulin tyrosine carboxypeptidase (TTCP) and tubulin tyrosine ligase (TTL), respectively. In terms of processing, acetylation of alpha chains at Lys-40 stabilizes microtubules and affects affinity and processivity of microtubule motors. This modification has a role in multiple cellular functions, ranging from cell motility, cell cycle progression or cell differentiation to intracellular trafficking and signaling.

The protein resides in the cytoplasm. Its subcellular location is the cytoskeleton. It carries out the reaction GTP + H2O = GDP + phosphate + H(+). In terms of biological role, tubulin is the major constituent of microtubules, a cylinder consisting of laterally associated linear protofilaments composed of alpha- and beta-tubulin heterodimers. Microtubules grow by the addition of GTP-tubulin dimers to the microtubule end, where a stabilizing cap forms. Below the cap, tubulin dimers are in GDP-bound state, owing to GTPase activity of alpha-tubulin. This Patella vulgata (Common limpet) protein is Tubulin alpha-2/alpha-4 chain (TUB2).